The primary structure comprises 40 residues: Metallothionein-1 (40 aa).

Belongs to the metallothionein superfamily. Type 5 family.

This protein binds cations of several transition elements. It is thought to be involved in detoxification processes. This is Metallothionein-1 (MtnA) from Drosophila melanogaster (Fruit fly).